We begin with the raw amino-acid sequence, 141 residues long: Cystatin (141 aa).

The signal sequence occupies residues 1–26 (MLHSQLPVAAPLRLLCALLLLPSVTM). In terms of domain architecture, Cystatin spans 29–129 (GGLSPRSVTD…CRFQVWSRPW (101 aa)). The Secondary area of contact motif lies at 73 to 77 (QVVTG). 2 disulfide bridges follow: C91–C107 and C120–C140.

The protein belongs to the cystatin family. In terms of tissue distribution, expressed at a low level by the venom gland (at protein level).

The protein resides in the secreted. Inhibits various C1 cysteine proteases including cathepsin L, papain and cathepsin B. This protein has no toxic activity and its function in the venom is unknown. It may play a role as a housekeeping or regulatory protein. This is Cystatin from Hoplocephalus stephensii (Stephens's banded snake).